Here is a 304-residue protein sequence, read N- to C-terminus: Tritrans,polycis-undecaprenyl-diphosphate synthase (geranylgeranyl-diphosphate specific) (304 aa).

Asp-33 is a catalytic residue. Asp-33 is a Mg(2+) binding site. Substrate-binding positions include 34-37 (GNRR), Lys-46, His-50, and 78-80 (STE). Residue Asn-81 is the Proton acceptor of the active site. Residues Phe-82, Arg-84, Arg-203, and 209–211 (RTS) contribute to the substrate site.

This sequence belongs to the UPP synthase family. As to quaternary structure, homodimer. Mg(2+) serves as cofactor.

It carries out the reaction geranylgeranyl diphosphate + 7 isopentenyl diphosphate = tri-trans,hepta-cis-undecaprenyl diphosphate + 7 diphosphate. Catalyzes the sequential condensation of isopentenyl diphosphate (IPP) with geranylgeranyl diphosphate (GGPP) to yield (2Z,6Z,10Z,14Z,18Z,22Z,26Z,30E,34E,38E)-undecaprenyl diphosphate (tritrans,heptacis-UPP). It is probably the precursor of glycosyl carrier lipids. The protein is Tritrans,polycis-undecaprenyl-diphosphate synthase (geranylgeranyl-diphosphate specific) of Haloarcula marismortui (strain ATCC 43049 / DSM 3752 / JCM 8966 / VKM B-1809) (Halobacterium marismortui).